Reading from the N-terminus, the 307-residue chain is UDP-N-acetylenolpyruvoylglucosamine reductase (307 aa).

One can recognise an FAD-binding PCMH-type domain in the interval 33–197 (TGGNADFYIT…LEAAFTLAPG (165 aa)). R176 is a catalytic residue. Catalysis depends on S226, which acts as the Proton donor. The active site involves E296.

It belongs to the MurB family. The cofactor is FAD.

It localises to the cytoplasm. The enzyme catalyses UDP-N-acetyl-alpha-D-muramate + NADP(+) = UDP-N-acetyl-3-O-(1-carboxyvinyl)-alpha-D-glucosamine + NADPH + H(+). It participates in cell wall biogenesis; peptidoglycan biosynthesis. Functionally, cell wall formation. The sequence is that of UDP-N-acetylenolpyruvoylglucosamine reductase from Staphylococcus aureus (strain COL).